A 238-amino-acid polypeptide reads, in one-letter code: Small ribosomal subunit protein uS2 (238 aa).

It belongs to the universal ribosomal protein uS2 family.

The chain is Small ribosomal subunit protein uS2 from Prochlorococcus marinus (strain SARG / CCMP1375 / SS120).